The primary structure comprises 1388 residues: Endoribonuclease Dicer homolog 2 (1388 aa).

The region spanning 31 to 210 (ALEKAIKQNT…DSYWKKIHEL (180 aa)) is the Helicase ATP-binding domain. 44-51 (LETGSGKT) is a binding site for ATP. Residues 152–155 (DECH) carry the DECH box motif. In terms of domain architecture, Helicase C-terminal spans 380 to 544 (LGYSSLENIR…PLPDDSDEPL (165 aa)). The Dicer dsRNA-binding fold domain maps to 559 to 645 (SVSLIYHYCS…VPDMVVAETV (87 aa)). The 131-residue stretch at 805 to 935 (TSHEVLEKHE…LPPELCHVIL (131 aa)) folds into the PAZ domain. RNase III domains lie at 962-1113 (AYNL…SEGG) and 1149-1296 (VGYM…VDSG). The Mg(2+) site is built by Glu-1188, Asp-1282, and Glu-1285. Residues 1315-1384 (TPETVKLHPV…YKEVLNLLKN (70 aa)) form the DRBM domain.

Belongs to the helicase family. Dicer subfamily. The cofactor is Mg(2+). It depends on Mn(2+) as a cofactor.

Its subcellular location is the nucleus. The protein localises to the cytoplasm. Functionally, ribonuclease (RNase) III involved in RNA-mediated post-transcriptional gene silencing (PTGS). Involved in the processing of natural small interfering RNAs (nat-siRNAs, derived from cis-natural antisense transcripts) by cleaving small dsRNAs into 24 nucleotide nat-siRNAs. Plays an essential role in transitive silencing of transgenes by processing secondary siRNAs. This pathway, which requires DCL4 and RDR6, amplifies silencing by using the target RNA as substrate to generate secondary siRNAs, providing an efficient mechanism for long-distance silencing. May participate with DCL3 in the production of 24 nucleotide repeat-associated siRNAs (ra-siRNAs) which derive from heterochromatin and DNA repeats such as transposons. Plays a role in antiviral RNA silencing. Involved in the production of viral siRNAs derived from the turnip crinkle virus (TCV) and tobacco rattle virus (TRV). Targeted by the viral silencing suppressor (VSR) protein 2b of the cucumber mosaic virus (CMV) that inactivates DCL2 function in RNA silencing. Does not seem to be involved in microRNAs (miRNAs) processing. The protein is Endoribonuclease Dicer homolog 2 of Arabidopsis thaliana (Mouse-ear cress).